A 474-amino-acid chain; its full sequence is Dol-P-Glc:Glc(2)Man(9)GlcNAc(2)-PP-Dol alpha-1,2-glucosyltransferase (474 aa).

The Cytoplasmic segment spans residues 1–6 (MAQLEG). Residues 7–27 (YYFSAALSCTFLVSCLLFSAF) traverse the membrane as a helical segment. Over 28–64 (SRALREPYMDEIFHLPQAQRYCEGRFSLSQWDPMITT) the chain is Extracellular. A helical transmembrane segment spans residues 65–85 (LPGLYLVSVGVVKPASWILGW). At 86–97 (SEHVVCSIGMLR) the chain is on the cytoplasmic side. Residues 98 to 118 (FVNLLFSVGNFYLLYLLFRKI) form a helical membrane-spanning segment. The Extracellular segment spans residues 119–126 (QPRNKASS). The helical transmembrane segment at 127 to 147 (SIQRILSTLTLAVFPTLYFFN) threads the bilayer. At 148–150 (FLY) the chain is on the cytoplasmic side. A helical transmembrane segment spans residues 151-171 (YTEAGSVFFTLFAYLMCLYGN). The Extracellular portion of the chain corresponds to 172 to 175 (HRTS). Residues 176–196 (ALLGFCGFMFRQTNIIWAAFC) form a helical membrane-spanning segment. Residues 197–256 (AGHIIAQKCSEAWKTELQKKKEERLPPAKGPLSELRRVLQFLLMYSMSLKNLSMLFLLTW) are Cytoplasmic-facing. Residues 257–277 (PYMLLLLAFFVFVVVNGGIVV) traverse the membrane as a helical segment. The Extracellular portion of the chain corresponds to 278–283 (GDRSSH). A helical transmembrane segment spans residues 284–304 (EACLHFPQLFYFFSFTAFFSF). Topologically, residues 305–317 (PHLLSPTKVKTFL) are cytoplasmic. A helical membrane pass occupies residues 318–338 (SLVWKRRVQFSVITLVSVFLV). At 339–365 (WKFTYVHKYLLADNRHYTFYVWKRVFQ) the chain is on the extracellular side. Residues 366-386 (RHEIVKYLLVPAYMFAGWAVA) form a helical membrane-spanning segment. Residues 387 to 392 (DSLKSK) are Cytoplasmic-facing. The chain crosses the membrane as a helical span at residues 393-413 (SIFWNLMFFVCLVASTVPQKL). At 414–436 (LEFRYFILPYIIYRLNMPLPPIS) the chain is on the extracellular side. The chain crosses the membrane as a helical span at residues 437–457 (RLVCELGCYAVVNFLTFYIFL). Topologically, residues 458 to 473 (NKTFQWSDSHDIQRFM) are cytoplasmic.

It belongs to the ALG10 glucosyltransferase family. Interacts with KCNH1; may regulate KCNH1, possibly by regulating its N-glycosylation. Interacts with KCNH2; may reduce KCNH2 sensitivity to classic proarrhythmic drug blockade, possibly by regulating its N-glycosylation. As to expression, highly expressed in brain, skeletal muscle, uterus, small intestine and liver. Moderately expressed in lung and kidney. Weakly expressed in heart and stomach.

It is found in the endoplasmic reticulum membrane. It carries out the reaction an alpha-D-Glc-(1-&gt;3)-alpha-D-Glc-(1-&gt;3)-alpha-D-Man-(1-&gt;2)-alpha-D-Man-(1-&gt;2)-alpha-D-Man-(1-&gt;3)-[alpha-D-Man-(1-&gt;2)-alpha-D-Man-(1-&gt;3)-[alpha-D-Man-(1-&gt;2)-alpha-D-Man-(1-&gt;6)]-alpha-D-Man-(1-&gt;6)]-beta-D-Man-(1-&gt;4)-beta-D-GlcNAc-(1-&gt;4)-alpha-D-GlcNAc-diphospho-di-trans,poly-cis-dolichol + a di-trans,poly-cis-dolichyl beta-D-glucosyl phosphate = a alpha-D-Glc-(1-&gt;2)-alpha-D-Glc-(1-&gt;3)-alpha-D-Glc-(1-&gt;3)-alpha-D-Man-(1-&gt;2)-alpha-D-Man-(1-&gt;2)-alpha-D-Man-(1-&gt;3)-[alpha-D-Man-(1-&gt;2)-alpha-D-Man-(1-&gt;3)-[alpha-D-Man-(1-&gt;2)-alpha-D-Man-(1-&gt;6)]-alpha-D-Man-(1-&gt;6)]-beta-D-Man-(1-&gt;4)-beta-D-GlcNAc-(1-&gt;4)-alpha-D-GlcNAc-diphospho-di-trans,poly-cis-dolichol + a di-trans,poly-cis-dolichyl phosphate + H(+). The protein operates within protein modification; protein glycosylation. In terms of biological role, dol-P-Glc:Glc(2)Man(9)GlcNAc(2)-PP-Dol alpha-1,2-glucosyltransferase that operates in the biosynthetic pathway of dolichol-linked oligosaccharides, the glycan precursors employed in protein asparagine (N)-glycosylation. The assembly of dolichol-linked oligosaccharides begins on the cytosolic side of the endoplasmic reticulum membrane and finishes in its lumen. The sequential addition of sugars to dolichol pyrophosphate produces dolichol-linked oligosaccharides containing fourteen sugars, including two GlcNAcs, nine mannoses and three glucoses. Once assembled, the oligosaccharide is transferred from the lipid to nascent proteins by oligosaccharyltransferases. In the lumen of the endoplasmic reticulum, adds the third and last glucose residue from dolichyl phosphate glucose (Dol-P-Glc) onto the lipid-linked oligosaccharide intermediate Glc(2)Man(9)GlcNAc(2)-PP-Dol to produce Glc(3)Man(9)GlcNAc(2)-PP-Dol. This chain is Dol-P-Glc:Glc(2)Man(9)GlcNAc(2)-PP-Dol alpha-1,2-glucosyltransferase, found in Rattus norvegicus (Rat).